Here is a 209-residue protein sequence, read N- to C-terminus: NAD(P)H-quinone oxidoreductase subunit I (209 aa).

2 consecutive 4Fe-4S ferredoxin-type domains span residues 55-84 and 95-124; these read GRIH…VDYE and NSYS…MTEE. Positions 64, 67, 70, 74, 104, 107, 110, and 114 each coordinate [4Fe-4S] cluster.

The protein belongs to the complex I 23 kDa subunit family. As to quaternary structure, NDH-1 is composed of at least 11 different subunits. Requires [4Fe-4S] cluster as cofactor.

It localises to the cell inner membrane. The enzyme catalyses a plastoquinone + NADH + (n+1) H(+)(in) = a plastoquinol + NAD(+) + n H(+)(out). It carries out the reaction a plastoquinone + NADPH + (n+1) H(+)(in) = a plastoquinol + NADP(+) + n H(+)(out). Its function is as follows. NDH-1 shuttles electrons from an unknown electron donor, via FMN and iron-sulfur (Fe-S) centers, to quinones in the respiratory and/or the photosynthetic chain. The immediate electron acceptor for the enzyme in this species is believed to be plastoquinone. Couples the redox reaction to proton translocation, and thus conserves the redox energy in a proton gradient. This Gloeobacter violaceus (strain ATCC 29082 / PCC 7421) protein is NAD(P)H-quinone oxidoreductase subunit I.